A 263-amino-acid chain; its full sequence is MWELRSASFWRAIFAEFFATLFYVFFGLGASLRWAPGPLHVLQVALAFGLALATLVQAVGHISGAHVNPAVTFAFLVGSQMSLLRAICYVVAQLLGAVAGAAVLYSVTPPAVRGNLALNTLHPGVSVGQATIVEIFLTLQFVLCIFATYDERRNGRLGSVALAVGFSLTLGHLFGMYYTGAGMNPARSFAPAILTRNFTNHWVYWVGPVIGAGLGSLLYDFLLFPRLKSVSERLSILKGTRPSESNGQPEVTGEPVELKTQAL.

The Cytoplasmic portion of the chain corresponds to 1–12; that stretch reads MWELRSASFWRA. Residues 13-30 form a helical membrane-spanning segment; the sequence is IFAEFFATLFYVFFGLGA. Over 31–40 the chain is Extracellular; the sequence is SLRWAPGPLH. The chain crosses the membrane as a helical span at residues 41–59; it reads VLQVALAFGLALATLVQAV. The Cytoplasmic portion of the chain corresponds to 60-63; it reads GHIS. Positions 64–76 form an intramembrane region, discontinuously helical; sequence GAHVNPAVTFAFL. The NPA 1 signature appears at 68–70; it reads NPA. The Cytoplasmic portion of the chain corresponds to 77-85; that stretch reads VGSQMSLLR. Residues 86–106 traverse the membrane as a helical segment; the sequence is AICYVVAQLLGAVAGAAVLYS. Residues 107–126 are Extracellular-facing; sequence VTPPAVRGNLALNTLHPGVS. A helical membrane pass occupies residues 127–147; the sequence is VGQATIVEIFLTLQFVLCIFA. Residues 148 to 157 lie on the Cytoplasmic side of the membrane; that stretch reads TYDERRNGRL. A helical membrane pass occupies residues 158–175; it reads GSVALAVGFSLTLGHLFG. At 176 to 177 the chain is on the extracellular side; the sequence is MY. An intramembrane region (discontinuously helical) is located at residues 178–193; the sequence is YTGAGMNPARSFAPAI. Residues 184-186 carry the NPA 2 motif; that stretch reads NPA. Over 194-200 the chain is Extracellular; the sequence is LTRNFTN. The chain crosses the membrane as a helical span at residues 201-218; it reads HWVYWVGPVIGAGLGSLL. At 219 to 263 the chain is on the cytoplasmic side; the sequence is YDFLLFPRLKSVSERLSILKGTRPSESNGQPEVTGEPVELKTQAL. An interaction with CALM region spans residues 227 to 237; sequence LKSVSERLSIL. Residues Ser235, Ser243, and Ser245 each carry the phosphoserine modification. The segment at 240–263 is disordered; it reads TRPSESNGQPEVTGEPVELKTQAL.

This sequence belongs to the MIP/aquaporin (TC 1.A.8) family. As to quaternary structure, homotetramer; each monomer provides an independent water pore. Two homotetramers on opposing membranes can dimerize, forming a cell-cell junction. Interacts with CALM; the calcium-calmodulin/CALM complex interacts with the cytoplasmic domains of two aquaporins, leading to channel closure. Interacts with BFSP1 (via C-terminus); prevents calcium-dependent inhibition of the water channel activity. In terms of processing, subject to partial proteolytic cleavage in the eye lens core. Partial proteolysis promotes interactions between tetramers from adjoining membranes. Fatty acylated at Met-1 and Lys-238. The acyl modifications, in decreasing order of ion abundance, are: oleoyl (C18:1) &gt; palmitoyl (C16:0) &gt; stearoyl (C18:0) &gt; eicosenoyl (C20:1) &gt; dihomo-gamma-linolenoyl (C20:3) &gt; palmitoleoyl (C16:1) &gt; eicosadienoyl (C20:2). As to expression, detected in eye lens (at protein level).

It is found in the cell membrane. It localises to the cell junction. The catalysed reaction is H2O(in) = H2O(out). The water channel activity is inhibited by calcium through calmodulin/CALM. Aquaporins form homotetrameric transmembrane channels, with each monomer independently mediating water transport across the plasma membrane along its osmotic gradient. Specifically expressed in lens fiber cells, this aquaporin is crucial for maintaining lens water homeostasis and transparency. Beyond water permeability, it also acts as a cell-to-cell adhesion molecule, forming thin junctions between lens fiber cells that are essential for maintaining the ordered structure and transparency of the lens. This Ovis aries (Sheep) protein is Lens fiber major intrinsic protein.